The chain runs to 96 residues: Myosuppressin (96 aa).

Residues 1–24 (MALGNGYYCAVVCVVLACASVVLC) form the signal peptide. A propeptide spanning residues 25 to 80 (APAQLCAGAADDDPRAARFCQALNTFLELYAEAAGEQVPEYQALVRDYPQLLDTGM) is cleaved from the precursor. The residue at position 83 (Gln-83) is a Pyrrolidone carboxylic acid; partial. Residue Phe-92 is modified to Phenylalanine amide. Residue Arg-96 is a propeptide.

It belongs to the myosuppressin family. In terms of tissue distribution, expressed in corpora cardiaca (CC), corpora allata (CA), antennal lobe (AL) and gnathal ganglion (GNG) (at protein level). In its non-pyroglutamate form, expression in GNG detected in all animals, in AL, CC and in CA in most animals (at protein level). In its pyroglutamate form, expression in CC, CA and GNG detected in all animals, in AL in some animals (at protein level).

The protein resides in the secreted. Its function is as follows. Myoinhibiting neuropeptide. The protein is Myosuppressin of Agrotis ipsilon (Black cutworm moth).